We begin with the raw amino-acid sequence, 155 residues long: Large ribosomal subunit protein uL22 (155 aa).

It belongs to the universal ribosomal protein uL22 family. As to quaternary structure, part of the 50S ribosomal subunit.

In terms of biological role, this protein binds specifically to 23S rRNA. It makes multiple contacts with different domains of the 23S rRNA in the assembled 50S subunit and ribosome. Its function is as follows. The globular domain of the protein is located near the polypeptide exit tunnel on the outside of the subunit, while an extended beta-hairpin is found that lines the wall of the exit tunnel in the center of the 70S ribosome. The sequence is that of Large ribosomal subunit protein uL22 from Pyrococcus furiosus (strain ATCC 43587 / DSM 3638 / JCM 8422 / Vc1).